The sequence spans 487 residues: DEAD-box ATP-dependent RNA helicase CshA (487 aa).

Positions 3–31 match the Q motif motif; it reads ITFQDFQLSSDLTKAIKRMGFEEATPIQA. A Helicase ATP-binding domain is found at 34-204; the sequence is IPLGLANKDV…ERFMTNPEHV (171 aa). 47 to 54 is a binding site for ATP; it reads AQTGTGKT. Residues 152–155 carry the DEAD box motif; that stretch reads DEAD. The Helicase C-terminal domain maps to 215-375; sequence NIQQFYLEVH…RMKAPTLDEA (161 aa). Residues 428 to 440 show a composition bias toward basic and acidic residues; sequence DNTPVRLTEEAPL. The interval 428 to 487 is disordered; that stretch reads DNTPVRLTEEAPLRTKRNKNHHHRSSKRRDGGGYRGKNNRSSYDKKRSSNDRRQKKSYNS. Basic residues predominate over residues 441–454; it reads RTKRNKNHHHRSSK. A compositionally biased stretch (basic and acidic residues) spans 469 to 479; sequence SYDKKRSSNDR.

This sequence belongs to the DEAD box helicase family. CshA subfamily. Oligomerizes, may be a member of the RNA degradosome.

Its subcellular location is the cytoplasm. It catalyses the reaction ATP + H2O = ADP + phosphate + H(+). Its function is as follows. DEAD-box RNA helicase possibly involved in RNA degradation. Unwinds dsRNA in both 5'- and 3'-directions, has RNA-dependent ATPase activity. In Bacillus licheniformis (strain ATCC 14580 / DSM 13 / JCM 2505 / CCUG 7422 / NBRC 12200 / NCIMB 9375 / NCTC 10341 / NRRL NRS-1264 / Gibson 46), this protein is DEAD-box ATP-dependent RNA helicase CshA.